Consider the following 408-residue polypeptide: Tripartite motif containing 13 (408 aa).

An RING-type zinc finger spans residues 10-58 (CPICCSLFDDPRVLPCSHNFCKKCLDGVLEENSRTMQWRPSSFKCPTCR). The segment at 89 to 131 (PKMPVCKEHSDQPLNIFCSTDLKLICGSCATTGEHKKHVFSSI) adopts a B box-type zinc-finger fold. Positions 94, 97, 117, and 123 each coordinate Zn(2+). Residues 322–342 (ILVVACLILLLVTFLCAYPFI) traverse the membrane as a helical segment.

It localises to the endoplasmic reticulum membrane. Its pathway is protein modification; protein ubiquitination. In terms of biological role, E3 ubiquitin ligase involved in the retrotranslocation and turnover of membrane and secretory proteins from the ER through a set of processes named ER-associated degradation (ERAD). This process acts on misfolded proteins as well as in the regulated degradation of correctly folded proteins. The polypeptide is Tripartite motif containing 13 (trim13) (Xenopus tropicalis (Western clawed frog)).